We begin with the raw amino-acid sequence, 227 residues long: Cytochrome c oxidase subunit 2 (227 aa).

Residues 1 to 14 (MAHRAQVGLQDATS) lie on the Mitochondrial intermembrane side of the membrane. A helical membrane pass occupies residues 15–45 (PIMEELVIFHDHALMIIFLICFLVLYALFLT). Residues 46–59 (LTTKLTNTNISDAQ) are Mitochondrial matrix-facing. A helical transmembrane segment spans residues 60-87 (EMETIWTTLPAIILILIALPSLRILYLT). Over 88 to 227 (DEINDPSFTI…IFEMGPVFAL (140 aa)) the chain is Mitochondrial intermembrane. Cu cation is bound by residues His-161, Cys-196, Glu-198, Cys-200, His-204, and Met-207. Glu-198 is a binding site for Mg(2+).

This sequence belongs to the cytochrome c oxidase subunit 2 family. As to quaternary structure, component of the cytochrome c oxidase (complex IV, CIV), a multisubunit enzyme composed of 14 subunits. The complex is composed of a catalytic core of 3 subunits MT-CO1, MT-CO2 and MT-CO3, encoded in the mitochondrial DNA, and 11 supernumerary subunits COX4I, COX5A, COX5B, COX6A, COX6B, COX6C, COX7A, COX7B, COX7C, COX8 and NDUFA4, which are encoded in the nuclear genome. The complex exists as a monomer or a dimer and forms supercomplexes (SCs) in the inner mitochondrial membrane with NADH-ubiquinone oxidoreductase (complex I, CI) and ubiquinol-cytochrome c oxidoreductase (cytochrome b-c1 complex, complex III, CIII), resulting in different assemblies (supercomplex SCI(1)III(2)IV(1) and megacomplex MCI(2)III(2)IV(2)). Found in a complex with TMEM177, COA6, COX18, COX20, SCO1 and SCO2. Interacts with TMEM177 in a COX20-dependent manner. Interacts with COX20. Interacts with COX16. Cu cation is required as a cofactor.

It is found in the mitochondrion inner membrane. It catalyses the reaction 4 Fe(II)-[cytochrome c] + O2 + 8 H(+)(in) = 4 Fe(III)-[cytochrome c] + 2 H2O + 4 H(+)(out). Functionally, component of the cytochrome c oxidase, the last enzyme in the mitochondrial electron transport chain which drives oxidative phosphorylation. The respiratory chain contains 3 multisubunit complexes succinate dehydrogenase (complex II, CII), ubiquinol-cytochrome c oxidoreductase (cytochrome b-c1 complex, complex III, CIII) and cytochrome c oxidase (complex IV, CIV), that cooperate to transfer electrons derived from NADH and succinate to molecular oxygen, creating an electrochemical gradient over the inner membrane that drives transmembrane transport and the ATP synthase. Cytochrome c oxidase is the component of the respiratory chain that catalyzes the reduction of oxygen to water. Electrons originating from reduced cytochrome c in the intermembrane space (IMS) are transferred via the dinuclear copper A center (CU(A)) of subunit 2 and heme A of subunit 1 to the active site in subunit 1, a binuclear center (BNC) formed by heme A3 and copper B (CU(B)). The BNC reduces molecular oxygen to 2 water molecules using 4 electrons from cytochrome c in the IMS and 4 protons from the mitochondrial matrix. This Pongo pygmaeus (Bornean orangutan) protein is Cytochrome c oxidase subunit 2 (MT-CO2).